Here is a 343-residue protein sequence, read N- to C-terminus: D-alanine--D-alanine ligase (343 aa).

Positions 132–337 constitute an ATP-grasp domain; the sequence is KNLFSYHKIP…YPDLIDKLIE (206 aa). 165–220 contacts ATP; the sequence is DRFLGWPCFVKPANMGSSIGVSKVHSPGEVKKALEKGFYYDRKLIFEEFVEGREIE. Aspartate 291, glutamate 304, and asparagine 306 together coordinate Mg(2+).

The protein belongs to the D-alanine--D-alanine ligase family. Requires Mg(2+) as cofactor. Mn(2+) is required as a cofactor.

Its subcellular location is the cytoplasm. The enzyme catalyses 2 D-alanine + ATP = D-alanyl-D-alanine + ADP + phosphate + H(+). It participates in cell wall biogenesis; peptidoglycan biosynthesis. Functionally, cell wall formation. The chain is D-alanine--D-alanine ligase from Halothermothrix orenii (strain H 168 / OCM 544 / DSM 9562).